Reading from the N-terminus, the 242-residue chain is Uridylate kinase (242 aa).

Residue 11 to 14 participates in ATP binding; it reads KLSG. An involved in allosteric activation by GTP region spans residues 19–24; sequence GNMGYG. Gly-53 is a UMP binding site. ATP contacts are provided by Gly-54 and Arg-58. UMP is bound by residues Asp-73 and 134–141; that span reads SGNPFFTT. ATP-binding residues include Thr-161, Tyr-167, and Asp-170.

The protein belongs to the UMP kinase family. In terms of assembly, homohexamer.

It localises to the cytoplasm. It catalyses the reaction UMP + ATP = UDP + ADP. The protein operates within pyrimidine metabolism; CTP biosynthesis via de novo pathway; UDP from UMP (UMPK route): step 1/1. Its activity is regulated as follows. Allosterically activated by GTP. Inhibited by UTP. In terms of biological role, catalyzes the reversible phosphorylation of UMP to UDP. This chain is Uridylate kinase, found in Trichormus variabilis (strain ATCC 29413 / PCC 7937) (Anabaena variabilis).